The following is a 448-amino-acid chain: Allantoinase (448 aa).

Histidine 60, histidine 62, lysine 147, histidine 183, histidine 239, and aspartate 312 together coordinate Zn(2+). Lysine 147 carries the post-translational modification N6-carboxylysine.

This sequence belongs to the metallo-dependent hydrolases superfamily. Allantoinase family. As to quaternary structure, homotetramer. The cofactor is Zn(2+). Post-translationally, carboxylation allows a single lysine to coordinate two zinc ions.

It carries out the reaction (S)-allantoin + H2O = allantoate + H(+). It functions in the pathway nitrogen metabolism; (S)-allantoin degradation; allantoate from (S)-allantoin: step 1/1. In terms of biological role, catalyzes the conversion of allantoin (5-ureidohydantoin) to allantoic acid by hydrolytic cleavage of the five-member hydantoin ring. The sequence is that of Allantoinase from Deinococcus radiodurans (strain ATCC 13939 / DSM 20539 / JCM 16871 / CCUG 27074 / LMG 4051 / NBRC 15346 / NCIMB 9279 / VKM B-1422 / R1).